The following is a 340-amino-acid chain: Lysophospholipase L2 (340 aa).

It is found in the cell inner membrane. It catalyses the reaction a 1-acyl-sn-glycero-3-phosphocholine + H2O = sn-glycerol 3-phosphocholine + a fatty acid + H(+). The protein is Lysophospholipase L2 (pldB) of Escherichia coli O6:H1 (strain CFT073 / ATCC 700928 / UPEC).